A 639-amino-acid polypeptide reads, in one-letter code: Centromere protein T (639 aa).

5 disordered regions span residues 1-64, 266-294, 307-451, 458-477, and 494-534; these read MDGR…RPNA, QLSD…GLVS, SEKD…ERGT, AAEE…ESEE, and QPVL…TREP. Over residues 12 to 23 the composition is skewed to low complexity; the sequence is RAAPTPRVAVRS. The flexible stalk domain stretch occupies residues 80-500; sequence IIQNQPQVSP…YRPQPVLSPP (421 aa). Positions 267–281 are enriched in polar residues; the sequence is LSDSKTSAQRSNTSY. Basic and acidic residues-rich tracts occupy residues 307–319, 329–338, 356–371, and 432–449; these read SEKD…EHVD, QGEEEQDHSQ, TEHH…SEKK, and PGAK…EIER. Residues 458–469 show a composition bias toward acidic residues; sequence AAEEEATDDESD.

Belongs to the CENP-T/CNN1 family. In terms of assembly, component of the CENPA-CAD complex, composed of CENPI, CENPK, CENPL, CENPO, CENPP, CENPQ, CENPR and CENPS. The CENPA-CAD complex is probably recruited on centromeres by the CENPA-NAC complex, at least composed of CENPA, CENPC, CENPH, CENPM, CENPN, CENPT and CENPU. Identified in a centromeric complex containing histones H2A, H2B, H3 and H4, and at least CENPA, CENPB, CENPC, CENPT, CENPN, HJURP, SUPT16H, SSRP1 and RSF1. Interacts (via N-terminus) with the NDC80 complex. Heterodimer with CENPW; this dimer coassembles with CENPS-CENPX heterodimers at centromeres to form the tetrameric CENP-T-W-S-X complex.

Its subcellular location is the nucleus. The protein localises to the chromosome. It is found in the centromere. The protein resides in the kinetochore. Component of the CENPA-NAC (nucleosome-associated) complex, a complex that plays a central role in assembly of kinetochore proteins, mitotic progression and chromosome segregation. The CENPA-NAC complex recruits the CENPA-CAD (nucleosome distal) complex and may be involved in incorporation of newly synthesized CENPA into centromeres. Part of a nucleosome-associated complex that binds specifically to histone H3-containing nucleosomes at the centromere, as opposed to nucleosomes containing CENPA. Component of the heterotetrameric CENP-T-W-S-X complex that binds and supercoils DNA, and plays an important role in kinetochore assembly. CENPT has a fundamental role in kinetochore assembly and function. It is one of the inner kinetochore proteins, with most further proteins binding downstream. Required for normal chromosome organization and normal progress through mitosis. This is Centromere protein T (CENPT) from Gallus gallus (Chicken).